The following is a 1609-amino-acid chain: Laminin subunit gamma-1 (1609 aa).

The first 33 residues, 1-33 (MRGSHRAAPALRPRGRLWPVLAVLAAAAAAGCA), serve as a signal peptide directing secretion. One can recognise a Laminin N-terminal domain in the interval 46 to 285 (RPQRCMPEFV…AISDFAVGGR (240 aa)). 2 N-linked (GlcNAc...) asparagine glycosylation sites follow: asparagine 60 and asparagine 134. Intrachain disulfides connect cysteine 286/cysteine 295, cysteine 288/cysteine 305, cysteine 307/cysteine 316, cysteine 319/cysteine 339, cysteine 342/cysteine 351, cysteine 344/cysteine 367, cysteine 370/cysteine 379, cysteine 382/cysteine 395, cysteine 398/cysteine 410, cysteine 400/cysteine 416, cysteine 418/cysteine 427, cysteine 430/cysteine 442, cysteine 445/cysteine 456, cysteine 447/cysteine 463, cysteine 465/cysteine 474, and cysteine 477/cysteine 492. 4 consecutive Laminin EGF-like domains span residues 286–341 (CKCN…ECLP), 342–397 (CDCN…ACSS), 398–444 (CHCS…GCRP), and 445–494 (CSCD…GCTP). Residues 495–504 (CFCFGHSSVC) enclose the Laminin EGF-like 5; first part domain. The Laminin IV type A domain maps to 514 to 689 (SISSTFQIDE…PGVPATWVES (176 aa)). Residues asparagine 576 and asparagine 650 are each glycosylated (N-linked (GlcNAc...) asparagine). The Laminin EGF-like 5; second part domain maps to 690–723 (CTCPVGYGGQFCEMCLSGYRRETPNLGPYSPCVL). Intrachain disulfides connect cysteine 724–cysteine 733, cysteine 726–cysteine 740, cysteine 742–cysteine 751, cysteine 754–cysteine 770, cysteine 773–cysteine 781, cysteine 775–cysteine 792, cysteine 795–cysteine 804, cysteine 807–cysteine 825, cysteine 828–cysteine 842, cysteine 830–cysteine 849, cysteine 852–cysteine 861, cysteine 864–cysteine 881, cysteine 884–cysteine 898, cysteine 886–cysteine 905, cysteine 907–cysteine 916, cysteine 919–cysteine 932, cysteine 935–cysteine 947, cysteine 937–cysteine 954, cysteine 956–cysteine 965, cysteine 968–cysteine 980, cysteine 983–cysteine 995, cysteine 985–cysteine 1001, cysteine 1003–cysteine 1012, and cysteine 1015–cysteine 1028. 6 consecutive Laminin EGF-like domains span residues 724–772 (CACN…DCQP), 773–827 (CPCP…LCRL), 828–883 (CQCS…KCKA), 884–934 (CNCN…GCER), 935–982 (CDCH…GCKP), and 983–1030 (CDCH…GCQE). Asparagine 1022 and asparagine 1107 each carry an N-linked (GlcNAc...) asparagine glycan. The domain II and I stretch occupies residues 1030–1609 (ECPACYRLVK…CFNTPSIEKP (580 aa)). The stretch at 1038-1609 (VKDKVADHRV…CFNTPSIEKP (572 aa)) forms a coiled coil. Position 1149 is a phosphoserine; by FAM20C (serine 1149). Asparagine 1161, asparagine 1175, asparagine 1205, asparagine 1223, asparagine 1241, asparagine 1380, asparagine 1395, and asparagine 1439 each carry an N-linked (GlcNAc...) asparagine glycan. A Phosphoserine modification is found at serine 1493.

Laminin is a complex glycoprotein, consisting of three different polypeptide chains (alpha, beta, gamma), which are bound to each other by disulfide bonds into a cross-shaped molecule comprising one long and three short arms with globules at each end. Gamma-1 is a subunit of laminin-1 (laminin-111 or EHS laminin), laminin-2 (laminin-211 or merosin), laminin-3 (laminin-121 or S-laminin), laminin-4 (laminin-221 or S-merosin), laminin-6 (laminin-311 or K-laminin), laminin-7 (laminin-321 or KS-laminin), laminin-8 (laminin-411), laminin-9 (laminin-421), laminin-10 (laminin-511) and laminin-11 (laminin-521). Interacts with SVEP1. Found in the basement membranes (major component).

The protein localises to the secreted. Its subcellular location is the extracellular space. The protein resides in the extracellular matrix. It localises to the basement membrane. Binding to cells via a high affinity receptor, laminin is thought to mediate the attachment, migration and organization of cells into tissues during embryonic development by interacting with other extracellular matrix components. This is Laminin subunit gamma-1 from Homo sapiens (Human).